A 542-amino-acid polypeptide reads, in one-letter code: Chitinase 1 (542 aa).

Positions 68–506 (FNVLCYFTDW…NAAHEGLKRR (439 aa)) constitute a GH18 domain. Chitin-binding positions include 186–187 (QE) and 213–216 (GGWS). The active-site Proton donor is the E256. Residues Y257, 323 to 326 (MTYD), and W486 contribute to the chitin site.

This sequence belongs to the glycosyl hydrolase 18 family. Semipurified toxin complex consists of at least YenA1-YenA2-YenB-YenC1-YenC2-Chi1-Chi2. The Yen-TC:K9 subcomplex is about 26 nm tall and 22 nm in diameter with 5-fold symmetry and 5 copies of YenA1, YenA2, Chi1 and Chi2; the chitinase subunits may be solvent accessible on the exterior the complex. The Yen-TC:K9 subcomplex has no insecticidal activity. The native complex with additional YenB, YenC1 and YenC2 subunits is 16 nm taller and is insecticidal; the toxicity-conferring subunits are present at about 1 copy each.

The protein resides in the secreted. The enzyme catalyses Random endo-hydrolysis of N-acetyl-beta-D-glucosaminide (1-&gt;4)-beta-linkages in chitin and chitodextrins.. With respect to regulation, toxin complex is secreted when grown at 25 degrees Celsius or less; at higher temperatures the proteins are present intracellularly but not secreted. In terms of biological role, part of an orally active toxin complex (TC) with strong insecticidal effects on larvae of the Coleoptera Costelytra zealandica, Acrossidius tasmania and Adoryphorus couloni and some Lepidoptera larvae. The TC has an endochitinase activity. This subunit might aid infection by degradation of the larval peritrophic membrane. The chain is Chitinase 1 from Yersinia entomophaga.